The chain runs to 137 residues: 15.7 kDa heat shock protein, peroxisomal (137 aa).

A sHSP domain is found at 15–134 (QEWSRSTALI…SSKVRNVNIT (120 aa)). Positions 135 to 137 (SKL) match the Microbody targeting signal motif.

It belongs to the small heat shock protein (HSP20) family. As to quaternary structure, may form oligomeric structures.

It is found in the peroxisome. Functionally, possesses chaperone activity. This chain is 15.7 kDa heat shock protein, peroxisomal (HSP15.7), found in Arabidopsis thaliana (Mouse-ear cress).